Consider the following 311-residue polypeptide: Solute carrier family 25 member 48 (311 aa).

3 Solcar repeats span residues 3–86 (NFQL…TQRF), 100–205 (PHVL…LSDW), and 214–301 (PSPC…SLQA). A run of 6 helical transmembrane segments spans residues 9-29 (FVAG…LDTV), 61-81 (GMSF…GVFS), 107-127 (LLAS…VDLI), 193-213 (CLYF…ACAG), 217-237 (CAVW…ATPM), and 277-295 (ITVN…FLGY).

The protein belongs to the mitochondrial carrier (TC 2.A.29) family.

The protein resides in the mitochondrion inner membrane. The sequence is that of Solute carrier family 25 member 48 (SLC25A48) from Bos taurus (Bovine).